The chain runs to 442 residues: Cytochrome c biogenesis protein CcsB (442 aa).

The next 3 membrane-spanning stretches (helical) occupy residues 17–37, 76–96, and 162–182; these read LRLAILLLLVIAIASMAGTVI, TPWYLTLLVLFGASLTACTLT, and LGPIVVHASMLLILLGGILGA.

The protein belongs to the Ccs1/CcsB family. As to quaternary structure, may interact with CcsA.

It is found in the cellular thylakoid membrane. Required during biogenesis of c-type cytochromes (cytochrome c6 and cytochrome f) at the step of heme attachment. The sequence is that of Cytochrome c biogenesis protein CcsB from Thermosynechococcus vestitus (strain NIES-2133 / IAM M-273 / BP-1).